Reading from the N-terminus, the 122-residue chain is Flowering-promoting factor 1-like protein 3 (122 aa).

Positions 16 to 36 are disordered; it reads ENPGSEESSSAGDGGGGGRRK.

The protein belongs to the FPF1 family.

The chain is Flowering-promoting factor 1-like protein 3 from Oryza sativa subsp. japonica (Rice).